Consider the following 112-residue polypeptide: Peptidyl-tRNA hydrolase (112 aa).

This sequence belongs to the PTH2 family.

Its subcellular location is the cytoplasm. It catalyses the reaction an N-acyl-L-alpha-aminoacyl-tRNA + H2O = an N-acyl-L-amino acid + a tRNA + H(+). Its function is as follows. The natural substrate for this enzyme may be peptidyl-tRNAs which drop off the ribosome during protein synthesis. The polypeptide is Peptidyl-tRNA hydrolase (Methanothermobacter thermautotrophicus (strain ATCC 29096 / DSM 1053 / JCM 10044 / NBRC 100330 / Delta H) (Methanobacterium thermoautotrophicum)).